The chain runs to 484 residues: MQSRMQGQRTLQLRQNSCIQPKWISQKNFTFGAATSAYQVEGAAHRALNGWDYFTHRYPERVSDRSIGDLACNSYDLYKDDVKLLKRMNVQAYRFSIAWSRVLPKGRLIGGVDENGITYYNNLINELKANGIEPFVTIFHWDVPQDFRRRIWRLLKPTYSDFKNYAELLFQRFGDRVKFWITLNQPYSLAVKGYGDGQYPPGRCTDCEFGGDSGTEPYIVGHHELLAHMEAVSLYRKRYQKFQGGKIGTTLIGRWFIPLNETNDLDKAAAKREFDFSVLGSTGVRTISKDNERLGDRLPKFTPKQSALLKGSLDFLGLNYYVTRYATYRPPPMPTQHSVLTDSGVTIGFERNGVSIGVKASINFDVKDLRHLVDFFLFVELLLLSTRIPSDSKSHQKQELLMLIANALADNGRIQFQCSHLSCLKCAIEDGCNVAGYFAWSLMDNYEFGNGYTLRFDMNWVNFTNPADRREKASGKWFSRFIAK.

A glycan (N-linked (GlcNAc...) asparagine) is linked at asparagine 28. A beta-D-glucoside-binding positions include glutamine 39, histidine 140, and 184–185 (NQ). Residues cysteine 204 and cysteine 207 are joined by a disulfide bond. Residue asparagine 260 is glycosylated (N-linked (GlcNAc...) asparagine). Residues tyrosine 321, tryptophan 440, 447-448 (EF), and phenylalanine 456 each bind a beta-D-glucoside. An N-linked (GlcNAc...) asparagine glycan is attached at asparagine 462.

This sequence belongs to the glycosyl hydrolase 1 family.

The enzyme catalyses a thioglucoside + H2O = a sugar + a thiol.. In Arabidopsis thaliana (Mouse-ear cress), this protein is Putative myrosinase 6.